The sequence spans 212 residues: ATP synthase F(0) complex subunit a (212 aa).

Transmembrane regions (helical) follow at residues 3 to 23, 58 to 78, 87 to 107, 128 to 148, 169 to 189, and 192 to 212; these read MMGIPLILIAIFLPTLLIYTS, WAAMLMTLMIXLLSMNLLGLL, QLSMNMALAIPLWLATVLTGL, IPLLIIIETVSLFIRPLALGV, FVLLPMMTLTALSTFIVLVLL, and LEIAVAMIQAYVFTLLLTLYL.

The protein belongs to the ATPase A chain family. In terms of assembly, component of the ATP synthase complex composed at least of ATP5F1A/subunit alpha, ATP5F1B/subunit beta, ATP5MC1/subunit c (homooctomer), MT-ATP6/subunit a, MT-ATP8/subunit 8, ATP5ME/subunit e, ATP5MF/subunit f, ATP5MG/subunit g, ATP5MK/subunit k, ATP5MJ/subunit j, ATP5F1C/subunit gamma, ATP5F1D/subunit delta, ATP5F1E/subunit epsilon, ATP5PF/subunit F6, ATP5PB/subunit b, ATP5PD/subunit d, ATP5PO/subunit OSCP. ATP synthase complex consists of a soluble F(1) head domain (subunits alpha(3) and beta(3)) - the catalytic core - and a membrane F(0) domain - the membrane proton channel (subunits c, a, 8, e, f, g, k and j). These two domains are linked by a central stalk (subunits gamma, delta, and epsilon) rotating inside the F1 region and a stationary peripheral stalk (subunits F6, b, d, and OSCP). Interacts with DNAJC30; interaction is direct.

Its subcellular location is the mitochondrion inner membrane. It catalyses the reaction H(+)(in) = H(+)(out). Its function is as follows. Subunit a, of the mitochondrial membrane ATP synthase complex (F(1)F(0) ATP synthase or Complex V) that produces ATP from ADP in the presence of a proton gradient across the membrane which is generated by electron transport complexes of the respiratory chain. ATP synthase complex consist of a soluble F(1) head domain - the catalytic core - and a membrane F(1) domain - the membrane proton channel. These two domains are linked by a central stalk rotating inside the F(1) region and a stationary peripheral stalk. During catalysis, ATP synthesis in the catalytic domain of F(1) is coupled via a rotary mechanism of the central stalk subunits to proton translocation. With the subunit c (ATP5MC1), forms the proton-conducting channel in the F(0) domain, that contains two crucial half-channels (inlet and outlet) that facilitate proton movement from the mitochondrial intermembrane space (IMS) into the matrix. Protons are taken up via the inlet half-channel and released through the outlet half-channel, following a Grotthuss mechanism. The protein is ATP synthase F(0) complex subunit a of Tropidurus hispidus (Peters' lava lizard).